The following is a 276-amino-acid chain: MSEEVTYATLTFQDSAGARNNRDGNNLRKRGHPAPSPIWRHAALGLVTLCLMLLIGLVTLGMMFLQISNDINSDSEKLSQLQKTIQQQQDNLSQQLGNSNNLSMEEEFLKSQISSVLKRQEQMAIKLCQELIIHTSDHRCNPCPKMWQWYQNSCYYFTTNEEKTWANSRKDCIDKNSTLVKIDSLEEKDFLMSQPLLMFSFFWLGLSWDSSGRSWFWEDGSVPSPSLFSTKELDQINGSKGCAYFQKGNIYISRCSAEIFWICEKTAAPVKTEDLD.

Residues methionine 1–alanine 43 lie on the Cytoplasmic side of the membrane. The ITIM motif signature appears at valine 5–leucine 10. Tyrosine 7 is subject to Phosphotyrosine. Residues leucine 44–phenylalanine 64 traverse the membrane as a helical; Signal-anchor for type II membrane protein segment. Over leucine 65–aspartate 276 the chain is Extracellular. Asparagine 91, asparagine 176, and asparagine 237 each carry an N-linked (GlcNAc...) asparagine glycan. The C-type lectin domain occupies tyrosine 150–glutamate 264. Cystine bridges form between cysteine 172–cysteine 263 and cysteine 242–cysteine 255.

Homodimer. Interacts (via ITIM motif) with PTPN6. Interacts (via ITIM motif) with PTPN11; this interaction triggers dephosphorylation and activation of PTPN11. Post-translationally, N-glycosylated. Detected in colon, heart, kidney, liver, lung, mammary gland, ovary, spleen and testis. Expressed in melanocytes (at protein level).

Its subcellular location is the cell membrane. In terms of biological role, inhibitory receptor postulated to negatively regulate immune and non-immune functions. Upon phosphorylation, recruits SH2 domain-containing PTPN6 and PTPN11 phosphatases to its ITIM motif and antagonizes activation signals. Although it inhibits KLRK1/NKG2D-mediated signaling, it does not bind known ligands of KLRK1/NKG2D and therefore is not its inhibitory counterpart. May limit activation of myeloid cell subsets in response to infection or tissue inflammation. May protect target cells against natural killer cell-mediated lysis. May negatively regulate cell cycle and differentiation of melanocytes via inactivation of STAT3. The polypeptide is C-type lectin domain family 12 member B (Homo sapiens (Human)).